Here is a 1659-residue protein sequence, read N- to C-terminus: Intersectin-2 (1659 aa).

An EH 1 domain is found at 22–110 (ERTKHDKQFD…PIMKQPPMFS (89 aa)). In terms of domain architecture, EF-hand 1 spans 54–89 (LPAPVLAEIWALSDLNKDGKMDQQEFSIAMKLIKLK). The Ca(2+) site is built by Asp-67, Asn-69, Asp-71, Lys-73, and Glu-78. Ser-110, Ser-211, and Ser-231 each carry phosphoserine. The segment covering 220–231 (STSSTASLSGNS) has biased composition (low complexity). Residues 220–242 (STSSTASLSGNSPKTGTSEWAVP) form a disordered region. An EH 2 domain is found at 245–334 (SRLKYRQKFN…PELVPPSFRG (90 aa)). In terms of domain architecture, EF-hand 2 spans 278–313 (LSQTQLATIWTLADIDGDGQLKAEEFILAMHLTDMA). The interval 335-382 (GKQVDSVNGTLPSYQKTQEEEPQKKLPVTFEDKRKANYERGNMELEKR) is disordered. Residues 339 to 350 (DSVNGTLPSYQK) are compositionally biased toward polar residues. A compositionally biased stretch (basic and acidic residues) spans 351-382 (TQEEEPQKKLPVTFEDKRKANYERGNMELEKR). Residues 365–717 (EDKRKANYER…KAEAKQSETA (353 aa)) adopt a coiled-coil conformation. Tyr-554 carries the phosphotyrosine modification. The residue at position 574 (Thr-574) is a Phosphothreonine. A compositionally biased stretch (basic and acidic residues) spans 689-713 (KQKRLQEEKSQDKTQEEERKAEAKQ). The segment at 689–715 (KQKRLQEEKSQDKTQEEERKAEAKQSE) is disordered. An SH3 1 domain is found at 718–779 (SALVNYRALY…PCNYVEKVLS (62 aa)). Thr-836 carries the post-translational modification Phosphothreonine. Phosphoserine is present on residues Ser-838 and Ser-843. Positions 852-910 (VENLKAQALCSWTAKKENHLNFSKHDVITVLEQQENWWFGEVHGGRGWFPKSYVKLIPG) constitute an SH3 2 domain. Residue Tyr-922 is modified to Phosphotyrosine. SH3 domains are found at residues 942 to 1000 (PVGE…PKDQ), 1014 to 1078 (KKPE…LLGP), and 1088 to 1147 (HAVC…MTTD). The DH domain occupies 1170–1357 (KRQGYIHELI…EELCSQVNEG (188 aa)). Residues 1396–1506 (KLLHSGKLYK…WVQKIKGASE (111 aa)) enclose the PH domain. The region spanning 1514 to 1630 (KKREKAYQAR…RTEQESKGPT (117 aa)) is the C2 domain. 3 residues coordinate Ca(2+): Asp-1602, Ser-1605, and Asp-1608.

As to quaternary structure, belongs to a complex that may contain multimers of ITSN1, ITSN2 and EPS15, and different partners according to the step in the endocytic process. Interacts with ADAM15. Interacts with FASLG. Interacts with ANKRD54. Interacts with FCHO2. It depends on Ca(2+) as a cofactor. As to expression, widely expressed in adult tissues.

The protein resides in the cytoplasm. Functionally, adapter protein that may provide indirect link between the endocytic membrane traffic and the actin assembly machinery. May regulate the formation of clathrin-coated vesicles (CCPs). Seems to be involved in CCPs maturation including invagination or budding. Involved in endocytosis of integrin beta-1 (ITGB1) and transferrin receptor (TFR). Plays a role in dendrite formation by melanocytes. The protein is Intersectin-2 (Itsn2) of Mus musculus (Mouse).